We begin with the raw amino-acid sequence, 447 residues long: Tol-Pal system protein TolB (447 aa).

An N-terminal signal peptide occupies residues 1–29 (MITMSRIRSLAAFAVFVILGVAAVLPAQA).

This sequence belongs to the TolB family. The Tol-Pal system is composed of five core proteins: the inner membrane proteins TolA, TolQ and TolR, the periplasmic protein TolB and the outer membrane protein Pal. They form a network linking the inner and outer membranes and the peptidoglycan layer.

It is found in the periplasm. Its function is as follows. Part of the Tol-Pal system, which plays a role in outer membrane invagination during cell division and is important for maintaining outer membrane integrity. This Paramagnetospirillum magneticum (strain ATCC 700264 / AMB-1) (Magnetospirillum magneticum) protein is Tol-Pal system protein TolB.